Consider the following 205-residue polypeptide: Transcriptional regulator GfcR (205 aa).

Belongs to the purine/pyrimidine phosphoribosyltransferase family. GfcR subfamily.

The protein is Transcriptional regulator GfcR of Methanococcus maripaludis (strain DSM 14266 / JCM 13030 / NBRC 101832 / S2 / LL).